A 70-amino-acid polypeptide reads, in one-letter code: Cytochrome c oxidase subunit 8B, mitochondrial (70 aa).

A mitochondrion-targeting transit peptide spans 1–24 (MLSLRPALRLLQAPLRCWAVPKAH). Over 25–35 (VSAKPAETPTS) the chain is Mitochondrial matrix. A helical membrane pass occupies residues 36-59 (PAEQAVGLSFIFITFLGPAGWILS). Over 60–70 (HVENYKKRPRA) the chain is Mitochondrial intermembrane.

Belongs to the cytochrome c oxidase VIII family. As to quaternary structure, component of the cytochrome c oxidase (complex IV, CIV), a multisubunit enzyme composed of 14 subunits. The complex is composed of a catalytic core of 3 subunits MT-CO1, MT-CO2 and MT-CO3, encoded in the mitochondrial DNA, and 11 supernumerary subunits COX4I, COX5A, COX5B, COX6A, COX6B, COX6C, COX7A, COX7B, COX7C, COX8 and NDUFA4, which are encoded in the nuclear genome. The complex exists as a monomer or a dimer and forms supercomplexes (SCs) in the inner mitochondrial membrane with NADH-ubiquinone oxidoreductase (complex I, CI) and ubiquinol-cytochrome c oxidoreductase (cytochrome b-c1 complex, complex III, CIII), resulting in different assemblies (supercomplex SCI(1)III(2)IV(1) and megacomplex MCI(2)III(2)IV(2)).

The protein localises to the mitochondrion inner membrane. It functions in the pathway energy metabolism; oxidative phosphorylation. Functionally, component of the cytochrome c oxidase, the last enzyme in the mitochondrial electron transport chain which drives oxidative phosphorylation. The respiratory chain contains 3 multisubunit complexes succinate dehydrogenase (complex II, CII), ubiquinol-cytochrome c oxidoreductase (cytochrome b-c1 complex, complex III, CIII) and cytochrome c oxidase (complex IV, CIV), that cooperate to transfer electrons derived from NADH and succinate to molecular oxygen, creating an electrochemical gradient over the inner membrane that drives transmembrane transport and the ATP synthase. Cytochrome c oxidase is the component of the respiratory chain that catalyzes the reduction of oxygen to water. Electrons originating from reduced cytochrome c in the intermembrane space (IMS) are transferred via the dinuclear copper A center (CU(A)) of subunit 2 and heme A of subunit 1 to the active site in subunit 1, a binuclear center (BNC) formed by heme A3 and copper B (CU(B)). The BNC reduces molecular oxygen to 2 water molecules using 4 electrons from cytochrome c in the IMS and 4 protons from the mitochondrial matrix. The protein is Cytochrome c oxidase subunit 8B, mitochondrial (COX8B) of Ateles belzebuth (White-bellied spider monkey).